Consider the following 416-residue polypeptide: Ena/VASP-like protein (416 aa).

Residues 1–112 form the WH1 domain; the sequence is MSEQSICQAR…NAMLFALNIM (112 aa). A compositionally biased stretch (polar residues) spans 114–129; it reads SQEGGPSSQRQVQNGP. 2 disordered regions span residues 114-133 and 141-369; these read SQEGGPSSQRQVQNGPSPDE and VMEQ…PAGS. A Phosphoserine modification is found at Ser-130. The segment covering 141–157 has biased composition (basic and acidic residues); it reads VMEQHQQQRQESLERRT. The segment covering 169-180 has biased composition (low complexity); it reads PSSAASAPVSCS. Residues 181–206 show a composition bias toward pro residues; it reads GPPPPPPPPVPPPPTGATPPPPPPLP. The interval 222–242 is EVH2 block A; the sequence is GLAAAIAGAKLRRVQRPEDAS. The segment at 222-413 is EVH2; the sequence is GLAAAIAGAK…DAIRQELSGI (192 aa). The short motif at 231-234 is the KLKR element; it reads KLRR. Positions 242 to 253 are enriched in low complexity; it reads SGGSSPSGTSKS. 2 positions are modified to phosphoserine: Ser-246 and Ser-259. The segment at 265 to 282 is EVH2 block B; it reads GGLMEEMNKLLAKRRKAA. Polar residues predominate over residues 299–320; sequence EDPSTSPSPGTRAASQPPNSSE. Phosphoserine is present on residues Ser-304, Ser-306, Ser-329, Ser-331, Ser-341, Ser-349, Ser-354, and Ser-369. Residues 321 to 331 are compositionally biased toward basic and acidic residues; the sequence is AGRKPWERSNS. The interval 342-362 is required for interaction with ZDHHC17; that stretch reads RTPSVAKSPEAKSPLQSQPHS. The EVH2 block C stretch occupies residues 379–413; the sequence is DLDRMKQEILEEVVRELHKVKEEIIDAIRQELSGI.

Belongs to the Ena/VASP family. In terms of assembly, homotetramer. Binds to the SH3 domains of ABL1, LYN and SRC. Also binds to profilin, with preference for isoform IIa of PFN2, and the WW domain of APBB1/FE65. Binds to SEMA6A. Interacts, via the Pro-rich region, with the C-terminal SH3 domain of DNMBP. Interacts with RAPH1. Binds, via the EVH1 domain, the Pro-rich domain of Listeria monocytogenes actA. Binds, via the EVH1 domain, the Pro-rich domain of ZYX. Interacts with FYB1. Interacts with ZDHHC17. In terms of processing, phosphorylated by PKA; phosphorylation abolishes binding to SH3 domains of ABL and SRC.

The protein resides in the cytoplasm. It localises to the cytoskeleton. It is found in the stress fiber. Its subcellular location is the cell projection. The protein localises to the lamellipodium. Its function is as follows. Ena/VASP proteins are actin-associated proteins involved in a range of processes dependent on cytoskeleton remodeling and cell polarity such as axon guidance and lamellipodial and filopodial dynamics in migrating cells. EVL enhances actin nucleation and polymerization. This chain is Ena/VASP-like protein (EVL), found in Homo sapiens (Human).